The chain runs to 1621 residues: ABC transporter A family member 2 (1621 aa).

The next 7 helical transmembrane spans lie at 30–50, 234–254, 276–296, 309–329, 338–358, 365–385, and 405–425; these read ILFPIIVILVIFAILVLVMAF, SVFITAALMIFGFRLITDLVI, ISWMITSLVTALPVNLIISII, GVVIFTLILYLLTLLLLAFIL, FCGLLSFVIIIAINIGGIFVA, GAKLFLCLISPIAIACSIFAM, and NQVIGMLVLDIFFYIFLVWYL. An ABC transporter 1 domain is found at 484–717; the sequence is ISIRNLRKEY…FGCGYLLTCS (234 aa). 520–527 is an ATP binding site; that stretch reads GPNGSGKS. 7 consecutive transmembrane segments (helical) span residues 856–876, 1033–1053, 1083–1103, 1111–1131, 1142–1162, 1183–1203, and 1227–1247; these read FFLTLVIPLVFIIGSIIMYKA, IVYFIIIMMAGYALMAGSFAG, VWDYFFSFILILLTTCILAGI, FGLMFLCLILFCVSVVPLSYL, ATGAITAIHFAIGIIFVIISL, VDIVFCILSPLFAYSRILFLV, and GSPMIILAAHCIVWVSWIMIL. In terms of domain architecture, ABC transporter 2 spans 1293–1528; that stretch reads LQFRNLHKLF…FGAGYTFDVK (236 aa). An ATP-binding site is contributed by 1331–1338; that stretch reads GLNGAGKT.

It belongs to the ABC transporter superfamily. ABCA family.

It localises to the membrane. This Dictyostelium discoideum (Social amoeba) protein is ABC transporter A family member 2 (abcA2).